The chain runs to 314 residues: Methionyl-tRNA formyltransferase (314 aa).

A (6S)-5,6,7,8-tetrahydrofolate-binding site is contributed by 111 to 114 (SLLP).

Belongs to the Fmt family.

The enzyme catalyses L-methionyl-tRNA(fMet) + (6R)-10-formyltetrahydrofolate = N-formyl-L-methionyl-tRNA(fMet) + (6S)-5,6,7,8-tetrahydrofolate + H(+). Attaches a formyl group to the free amino group of methionyl-tRNA(fMet). The formyl group appears to play a dual role in the initiator identity of N-formylmethionyl-tRNA by promoting its recognition by IF2 and preventing the misappropriation of this tRNA by the elongation apparatus. In Coxiella burnetii (strain CbuK_Q154) (Coxiella burnetii (strain Q154)), this protein is Methionyl-tRNA formyltransferase.